The sequence spans 386 residues: MSSAHNTLESIKYRRGVLQLLDQRRLPLETVYCDITSIDDICCAIKEMRVRGAPAIAVSAALALAVVAERELKEQRQNSVWKTADDMRQFLLMSCDKMMSARPTAVNLSKVLIQLKKDIETDKANTMEAVLETCVQLAEKIYAADVSFNERIMRHGAAHLLKLASKERVNILTICNTGALATSRYGTALGIVRQLFYEGHLQHLYACETRPWNQGARLTVYECVQENIPCTLICDSAVSAVMKTHDIDAVVVGADRICKNGDTANKIGTYNLAVAAAYHKVPFFVAAPSTTLDPLTPDGEGVVIEEREATEITHIASGGGGLQSDKSNSDYGRKRVVADGPHLKVWNPVFDITPASLITGGIITEHGVFPPATAGPLFDISRIVEP.

Residue Asp-255 is the Proton donor of the active site.

The protein belongs to the eIF-2B alpha/beta/delta subunits family. MtnA subfamily.

It localises to the cytoplasm. Its subcellular location is the nucleus. The catalysed reaction is 5-(methylsulfanyl)-alpha-D-ribose 1-phosphate = 5-(methylsulfanyl)-D-ribulose 1-phosphate. The protein operates within amino-acid biosynthesis; L-methionine biosynthesis via salvage pathway; L-methionine from S-methyl-5-thio-alpha-D-ribose 1-phosphate: step 1/6. Catalyzes the interconversion of methylthioribose-1-phosphate (MTR-1-P) into methylthioribulose-1-phosphate (MTRu-1-P). The polypeptide is Methylthioribose-1-phosphate isomerase (Trypanosoma brucei brucei (strain 927/4 GUTat10.1)).